An 87-amino-acid chain; its full sequence is Small ribosomal subunit protein bS18 (87 aa).

The segment covering 1–10 (MAGKSSGDRR) has biased composition (basic and acidic residues). The interval 1 to 23 (MAGKSSGDRRKPLRGAKGGKNAA) is disordered.

This sequence belongs to the bacterial ribosomal protein bS18 family. In terms of assembly, part of the 30S ribosomal subunit. Forms a tight heterodimer with protein bS6.

In terms of biological role, binds as a heterodimer with protein bS6 to the central domain of the 16S rRNA, where it helps stabilize the platform of the 30S subunit. This chain is Small ribosomal subunit protein bS18, found in Clavibacter michiganensis subsp. michiganensis (strain NCPPB 382).